Reading from the N-terminus, the 498-residue chain is Nucleobase transporter PlAzg2 (498 aa).

Helical transmembrane passes span 88 to 108 (LLAG…NSSI), 118 to 138 (AGII…GLWG), 142 to 162 (LVIV…VQGM), 169 to 189 (ALAA…TSLV), 203 to 223 (AISV…GGVI), 236 to 256 (FADP…ILYI), 259 to 279 (VPGN…LFKA), 312 to 332 (TLVI…VGLI), 357 to 377 (ILSG…AAGI), 388 to 408 (IATG…TLVP), 412 to 432 (VAPI…HISF), 443 to 463 (FIIA…IGFI), and 478 to 498 (VKPL…LQTM).

It belongs to the nucleobase:cation symporter-2 (NCS2) (TC 2.A.40) family. Azg-like subfamily.

The protein resides in the cell membrane. Inhibited by the proton gradient disruptor carbonyl cyanide m-chlorophenylhydrazone (CCCP), but not by the sodium gradient disruptor ouabain. Transports adenine, guanine, hypoxanthine, xanthine, cytosine and uracil. Transport is probably proton-dependent. The sequence is that of Nucleobase transporter PlAzg2 from Paenibacillus larvae subsp. larvae (strain NRRL B-3650 / LMG 16245).